The following is a 327-amino-acid chain: Elongation factor P--(R)-beta-lysine ligase (327 aa).

Residue 80 to 82 participates in substrate binding; that stretch reads SPE. ATP is bound by residues 104-106 and asparagine 113; that span reads RNE. Tyrosine 122 provides a ligand contact to substrate. Residue 246–247 coordinates ATP; sequence EL. Position 253 (glutamate 253) interacts with substrate. Position 302 (glycine 302) interacts with ATP.

It belongs to the class-II aminoacyl-tRNA synthetase family. EpmA subfamily. As to quaternary structure, homodimer.

The catalysed reaction is D-beta-lysine + L-lysyl-[protein] + ATP = N(6)-((3R)-3,6-diaminohexanoyl)-L-lysyl-[protein] + AMP + diphosphate + H(+). Its function is as follows. With EpmB is involved in the beta-lysylation step of the post-translational modification of translation elongation factor P (EF-P). Catalyzes the ATP-dependent activation of (R)-beta-lysine produced by EpmB, forming a lysyl-adenylate, from which the beta-lysyl moiety is then transferred to the epsilon-amino group of a conserved specific lysine residue in EF-P. In Haemophilus ducreyi (strain 35000HP / ATCC 700724), this protein is Elongation factor P--(R)-beta-lysine ligase.